The chain runs to 341 residues: COP9 signalosome complex subunit 6 (341 aa).

The disordered stretch occupies residues 1-43 (MEQMEVDVDMSAKPSTSSSAAAGSSMAVDKTADQNPQPQGNIM). Residues 11–27 (SAKPSTSSSAAAGSSMA) show a composition bias toward low complexity. The MPN domain maps to 54-188 (ISLHPLVIMN…LKLFESLIDL (135 aa)).

It belongs to the peptidase M67A family. CSN6 subfamily. As to quaternary structure, component of the CSN complex, probably composed of CSN1b, alien/CSN2, CSN3, CSN4, CSN5, CSN6, CSN7 and CSN8.

It is found in the cytoplasm. The protein localises to the nucleus. In terms of biological role, component of the COP9 signalosome complex (CSN), a complex involved in various cellular and developmental processes. The CSN complex is an essential regulator of the ubiquitin (Ubl) conjugation pathway by mediating the deneddylation of the cullin subunits of the SCF-type E3 ligase complexes, leading to decrease the Ubl ligase activity of SCF. The CSN complex plays an essential role in oogenesis and embryogenesis and is required for proper photoreceptor R cell differentiation and promote lamina glial cell migration or axon targeting. It also promotes Ubl-dependent degradation of cyclin E (CycE) during early oogenesis. In Drosophila melanogaster (Fruit fly), this protein is COP9 signalosome complex subunit 6 (CSN6).